Here is an 815-residue protein sequence, read N- to C-terminus: SNF1 protein kinase subunit beta-1 (815 aa).

Polar residues predominate over residues 1 to 11 (MGNSPSTQDPS). Disordered regions lie at residues 1 to 88 (MGNS…TIDK) and 120 to 146 (HDVG…TVKR). The N-myristoyl glycine moiety is linked to residue Gly-2. The span at 12 to 31 (HSTKKEHGHHFHDAFNKDRQ) shows a compositional bias: basic and acidic residues. The segment covering 32–42 (GSITSQLFNNR) has biased composition (polar residues). Ser-33 is modified (phosphoserine). Composition is skewed to basic and acidic residues over residues 72–88 (PSTD…TIDK) and 120–129 (HDVGAPEEQV). Ser-181, Ser-198, Ser-200, Ser-206, Ser-209, and Ser-220 each carry phosphoserine. Disordered stretches follow at residues 311-335 (HANN…NDDF), 363-389 (HHNK…FASL), and 410-444 (PLHP…SSIS). Residues 313-326 (NNNGNIENNTRNKG) are compositionally biased toward low complexity. Ser-331 carries the phosphoserine modification. The span at 363–376 (HHNKTKKAQSKKIR) shows a compositional bias: basic residues. 2 stretches are compositionally biased toward low complexity: residues 377–389 (SASN…FASL) and 433–444 (HSNSMSSMSSIS). Residues 473 to 716 (VSTDIASALK…LQQGGNIDAE (244 aa)) are kinase-interacting sequence (KIS); required for interaction with SNF1. Residues Ser-494 and Ser-497 each carry the phosphoserine modification. Residues 581–616 (EPTLDEELPKRPELKRFPSSSRKSSYYSAKGVERPS) form a disordered region. The segment covering 587-596 (ELPKRPELKR) has biased composition (basic and acidic residues). The segment covering 599 to 608 (SSSRKSSYYS) has biased composition (low complexity). At Ser-643 the chain carries Phosphoserine. The interval 724–804 (SRYPVPDLPI…FITQVVYAPC (81 aa)) is association with SNF1 kinase complex (ASC) domain; required for interaction with SNF4.

This sequence belongs to the 5'-AMP-activated protein kinase beta subunit family. In terms of assembly, component of the SNF1 kinase complex, a heterotrimeric complex composed of the catalytic alpha subunit SNF1, one of the three related beta subunits SIP1, SIP2 or GAL83, and the regulatory gamma subunit SNF4. The beta subunit serves as a bridge between the catalytic and the regulatory subunit. Interacts (via KIS domain) with SNF1. Interacts (via ASC domain) with SNF4. Post-translationally, phosphorylated by SNF1 in vitro.

It localises to the cytoplasm. The protein localises to the vacuole membrane. Beta subunit of the SNF1 kinase complex, which is required for transcriptional, metabolic, and developmental adaptations in response to glucose limitation. Has a structural role, mediating heterotrimer formation, and a regulatory role, defining carbon source-regulated subcellular location and substrate specificity of the SNF1 kinase complex. Promotes the PKA-regulated relocalization of the SNF1 kinase complex to the vacuolar membrane in response to various types of carbon stress. In Saccharomyces cerevisiae (strain RM11-1a) (Baker's yeast), this protein is SNF1 protein kinase subunit beta-1 (SIP1).